A 609-amino-acid polypeptide reads, in one-letter code: Probable G-protein coupled receptor 153 (609 aa).

At 1–11 (MSDERRLPGSA) the chain is on the extracellular side. Residues 12-32 (VGWLVCGGLSLLANAWGILSV) traverse the membrane as a helical segment. Residues 33 to 41 (GAKQKKWKP) lie on the Cytoplasmic side of the membrane. The helical transmembrane segment at 42–62 (LEFLLCTLAATHMLNVAVPIA) threads the bilayer. At 63–84 (TYSVVQLRRQRPDFEWNEGLCK) the chain is on the extracellular side. Residues 85-105 (VFVSTFYTLTLATCFSVTSLS) traverse the membrane as a helical segment. The Cytoplasmic segment spans residues 106–126 (YHRMWMVCWPVNYRLSNAKKQ). A helical transmembrane segment spans residues 127-147 (AVHTVMGIWMVSFILSALPAV). The Extracellular segment spans residues 148 to 175 (GWHDTSERFYTHGCRFIVAEIGLGFGVC). A helical membrane pass occupies residues 176-196 (FLLLVGGSVAMGVICTAIALF). At 197–243 (QTLAVQVGRQADRRAFTVPTIVVEDAQGKRRSSIDGSEPAKTSLQTT) the chain is on the cytoplasmic side. Residues 244-264 (GLVTTIVFIYDCLMGFPVLVV) form a helical membrane-spanning segment. Residues 265–276 (SFSSLRADASAP) lie on the Extracellular side of the membrane. A helical transmembrane segment spans residues 277-297 (WMALCVLWCSVAQALLLPVFL). Topologically, residues 298–609 (WACDRYRADL…LHSDSLGSAS (312 aa)) are cytoplasmic. Disordered stretches follow at residues 446–496 (DAPP…SASA) and 514–609 (ALRR…GSAS). Low complexity-rich tracts occupy residues 458–479 (ESLL…RDSP) and 527–536 (AAPDGADPGE). The span at 571–583 (EPGGLRAAGGGGS) shows a compositional bias: gly residues. The segment covering 584 to 596 (TSSFLSSPSESSG) has biased composition (low complexity).

It belongs to the G-protein coupled receptor 1 family.

Its subcellular location is the cell membrane. Orphan receptor. The chain is Probable G-protein coupled receptor 153 (GPR153) from Homo sapiens (Human).